The following is a 116-amino-acid chain: NADH-quinone oxidoreductase subunit A (116 aa).

A run of 3 helical transmembrane segments spans residues 3 to 23 (FTLLVVVILTAIALVAVALGI), 61 to 81 (FAILFLMFDVETVFLFPWAVV), and 85 to 105 (LGVYGLFSILFFLVILVLGLA).

It belongs to the complex I subunit 3 family. As to quaternary structure, NDH-1 is composed of 14 different subunits. Subunits NuoA, H, J, K, L, M, N constitute the membrane sector of the complex.

The protein resides in the cell inner membrane. It carries out the reaction a quinone + NADH + 5 H(+)(in) = a quinol + NAD(+) + 4 H(+)(out). In terms of biological role, NDH-1 shuttles electrons from NADH, via FMN and iron-sulfur (Fe-S) centers, to quinones in the respiratory chain. The immediate electron acceptor for the enzyme in this species is believed to be a menaquinone. Couples the redox reaction to proton translocation (for every two electrons transferred, four hydrogen ions are translocated across the cytoplasmic membrane), and thus conserves the redox energy in a proton gradient. In Phocaeicola vulgatus (strain ATCC 8482 / DSM 1447 / JCM 5826 / CCUG 4940 / NBRC 14291 / NCTC 11154) (Bacteroides vulgatus), this protein is NADH-quinone oxidoreductase subunit A.